The sequence spans 209 residues: Large ribosomal subunit protein uL3 (209 aa).

Gln-150 carries the N5-methylglutamine modification.

The protein belongs to the universal ribosomal protein uL3 family. As to quaternary structure, part of the 50S ribosomal subunit. Forms a cluster with proteins L14 and L19. Methylated by PrmB.

Functionally, one of the primary rRNA binding proteins, it binds directly near the 3'-end of the 23S rRNA, where it nucleates assembly of the 50S subunit. The chain is Large ribosomal subunit protein uL3 from Citrobacter koseri (strain ATCC BAA-895 / CDC 4225-83 / SGSC4696).